Reading from the N-terminus, the 149-residue chain is Ribonuclease pancreatic (149 aa).

The signal sequence occupies residues 1-25 (MGLENSLILFSLLVLVLGWVQPSLG). Residues 25 to 62 (GKESSPDKFKRQHMDTEGSSKSSPTYCNQMRSPQEMTK) form a disordered region. Residues 28 to 42 (SSPDKFKRQHMDTEG) are compositionally biased toward basic and acidic residues. 2 residues coordinate substrate: lysine 32 and arginine 35. Histidine 37 acts as the Proton acceptor in catalysis. Residues 43-61 (SSKSSPTYCNQMRSPQEMT) are compositionally biased toward polar residues. Cystine bridges form between cysteine 51–cysteine 109, cysteine 65–cysteine 120, cysteine 83–cysteine 135, and cysteine 90–cysteine 97. Residues 66–70 (KPVNT) and lysine 91 contribute to the substrate site. The active-site Proton donor is the histidine 144.

Belongs to the pancreatic ribonuclease family. As to quaternary structure, monomer. Interacts with and forms tight 1:1 complexes with RNH1. Dimerization of two such complexes may occur. Interaction with RNH1 inhibits this protein.

It is found in the secreted. It catalyses the reaction an [RNA] containing cytidine + H2O = an [RNA]-3'-cytidine-3'-phosphate + a 5'-hydroxy-ribonucleotide-3'-[RNA].. The catalysed reaction is an [RNA] containing uridine + H2O = an [RNA]-3'-uridine-3'-phosphate + a 5'-hydroxy-ribonucleotide-3'-[RNA].. Its function is as follows. Endonuclease that catalyzes the cleavage of RNA on the 3' side of pyrimidine nucleotides. Acts on single-stranded and double-stranded RNA. This is Ribonuclease pancreatic (RNASE1) from Sundamys muelleri (Mueller's giant sunda rat).